The chain runs to 351 residues: DNA polymerase IV (351 aa).

The region spanning 4 to 185 (IIHVDMDCFF…LPLAKIPGVG (182 aa)) is the UmuC domain. Mg(2+) contacts are provided by aspartate 8 and aspartate 103. Glutamate 104 is a catalytic residue.

The protein belongs to the DNA polymerase type-Y family. In terms of assembly, monomer. Mg(2+) serves as cofactor.

The protein localises to the cytoplasm. The enzyme catalyses DNA(n) + a 2'-deoxyribonucleoside 5'-triphosphate = DNA(n+1) + diphosphate. Functionally, poorly processive, error-prone DNA polymerase involved in untargeted mutagenesis. Copies undamaged DNA at stalled replication forks, which arise in vivo from mismatched or misaligned primer ends. These misaligned primers can be extended by PolIV. Exhibits no 3'-5' exonuclease (proofreading) activity. May be involved in translesional synthesis, in conjunction with the beta clamp from PolIII. The sequence is that of DNA polymerase IV from Escherichia coli O1:K1 / APEC.